Here is a 459-residue protein sequence, read N- to C-terminus: MFS-type transporter SLC18B1 (459 aa).

The residue at position 1 (Met1) is an N-acetylmethionine. Residues 1–10 show a composition bias toward low complexity; the sequence is MDEAGSPAPA. The interval 1–27 is disordered; it reads MDEAGSPAPAGTGGGDDPGGSTRETSR. Topologically, residues 1–33 are cytoplasmic; it reads MDEAGSPAPAGTGGGDDPGGSTRETSRRLSREQ. Position 21 is a phosphoserine (Ser21). Residues 34 to 54 traverse the membrane as a helical segment; it reads IFVLVSAASMNLGCMMTYSIL. Residues 55-70 lie on the Extracellular side of the membrane; it reads GPFFPKEAEKKGASNT. A helical membrane pass occupies residues 71–91; sequence MIGMIFGCYALFELLASLVFG. Residues 92–100 are Cytoplasmic-facing; that stretch reads KYLVHIGAK. A helical transmembrane segment spans residues 101–121; sequence FMFIAGMFVSGGVTILFGVLD. Topologically, residues 122-127 are extracellular; it reads QLPEGP. The chain crosses the membrane as a helical span at residues 128 to 148; sequence IFIAMCFLVRIVDAIGFGAAI. The Cytoplasmic portion of the chain corresponds to 149-167; that stretch reads TASSSILAKAFPNNVATVM. A helical membrane pass occupies residues 168–188; that stretch reads GSLEVFSGLGLVAGPPLGGLL. The Extracellular segment spans residues 189-195; sequence YQSFGYE. The chain crosses the membrane as a helical span at residues 196-216; the sequence is VPFIFLGCIVLLMIPLNLYIL. At 217–235 the chain is on the cytoplasmic side; it reads PSYAQESDPGKQSFWKLVT. Residues 236–256 traverse the membrane as a helical segment; that stretch reads LPKMGLLAFVIISLSSCFGFL. Over 257–274 the chain is Extracellular; it reads DPTLSLFVMEKFSLSTGY. Residues 275-295 form a helical membrane-spanning segment; that stretch reads VGLVFLGLSLSYAISSPLFGL. Topologically, residues 296 to 306 are cytoplasmic; sequence LSDKMPTLRKW. Residues 307–327 form a helical membrane-spanning segment; the sequence is LLVFGNLITAGCYMLLGPVPL. Over 328 to 333 the chain is Extracellular; it reads LHIKSQ. The helical transmembrane segment at 334-354 threads the bilayer; that stretch reads LWLLVLVLVVNGISAGMSIIP. The Cytoplasmic portion of the chain corresponds to 355–379; that stretch reads TFPEMLSCAYANGFEDSISTLGLVS. A helical transmembrane segment spans residues 380-400; it reads GLFGAMWSVGAFMGPILGGFL. The Extracellular portion of the chain corresponds to 401–409; it reads CEKIGFEWA. The helical transmembrane segment at 410–430 threads the bilayer; the sequence is AAMQGLWTLLSGVSMALFYLW. Residues 431-459 lie on the Cytoplasmic side of the membrane; that stretch reads EDSTARRRSKAQNSLGTEEERAALLPNDT. The segment at 440–459 is disordered; sequence KAQNSLGTEEERAALLPNDT.

It belongs to the major facilitator superfamily. In terms of tissue distribution, widely expressed, with highest expression in the lung, pancreas and kidney. High expression in the CNS, particularly in the hypothalamus, the thalamus and the cerebellum. In the forebrain, abundantly expressed in the telencephalon, especially in the cerebral cortex layers, except layer 1, as well as in the induseum griseum, the piriform area, the taenia tecta, dorsal part and in the entorhinal area, lateral part. Lower levels in the bed anterior olfactory nucleus, posteroventral part and in layer two of the olfactory tubercle. In the amygdala, high levels observed in the intercalated nucleus and the medial nucleus. In the diencephalon, expressed in the nuclei in both the hypothalamus and thalamus. Among the hypothalamic areas, strongest expression in the arcuate nucleus and in the ventromedial nucleus, as well as in the suprachiasmatic nucleus, anterior nucleus, especially in its central part, and in the magnocellular division of the paraventricular nucleus. In the thalamus, highest levels in the medial habenula. Expression also observed in the paraventricular thalamic nucleus, parataenial nucleus, central medial nucleus, intermediodorsal nucleus and lateral dorsal nucleus. In the hindbrain, detected in the cerebellum and in the pons. In the midbrain and the medulla, expression levels were modest. In the midbrain, highest expression in the periaqueductal gray and all subdivisions of the interpeduncular nucleus, except for the caudal part. In the pons, the strongest labeling was seen in the nucleus incertus and in the tegmental nucleus. Expressed in bone marrow-derived mast cells (at protein level).

It localises to the cytoplasmic vesicle. The protein localises to the secretory vesicle membrane. The protein resides in the secretory vesicle. It is found in the synaptic vesicle membrane. The enzyme catalyses spermine(in) + n H(+)(out) = spermine(out) + n H(+)(in). It carries out the reaction spermidine(in) + n H(+)(out) = spermidine(out) + n H(+)(in). The catalysed reaction is serotonin(in) + n H(+)(out) = serotonin(out) + n H(+)(in). Its function is as follows. Proton-coupled polyamine antiporter involved in the translocation of polyamines from cytosol into secretory vesicles prior to their release via exocytosis. Uses the electrochemical proton gradient generated by a V-type proton-pumping ATPase to couple the efflux of protons with the uptake of a polyamine molecule. Facilitates vesicular storage of spermine and spermidine in astrocytes with an impact on glutamatergic neuronal transmission and memory formation. Upon antigen stimulation, regulates polyamine accumulation and release in mast cell secretory granules, which in turn potentiates mast cell degranulation and histamine secretion. This Mus musculus (Mouse) protein is MFS-type transporter SLC18B1.